A 51-amino-acid chain; its full sequence is MARYRCCRSQSRSRCYRRGQRSRRRRRRSCQTRRRAMRCCRPRYRLRRRRH.

The protein belongs to the protamine P1 family. As to quaternary structure, cross-linked by interchain disulfide bonds around the DNA-helix. Testis.

The protein localises to the nucleus. Its subcellular location is the chromosome. Protamines substitute for histones in the chromatin of sperm during the haploid phase of spermatogenesis. They compact sperm DNA into a highly condensed, stable and inactive complex. The chain is Sperm protamine P1 (PRM1) from Hylobates lar (Lar gibbon).